Reading from the N-terminus, the 431-residue chain is Tol-Pal system protein TolB (431 aa).

Positions 1–26 are cleaved as a signal peptide; that stretch reads MSLMTKLGFRALVASCLITAGSAANA. The disordered stretch occupies residues 406-431; the sequence is DGSAPPQILSVQGGSVREPSWGPFMQ.

The protein belongs to the TolB family. In terms of assembly, the Tol-Pal system is composed of five core proteins: the inner membrane proteins TolA, TolQ and TolR, the periplasmic protein TolB and the outer membrane protein Pal. They form a network linking the inner and outer membranes and the peptidoglycan layer.

It localises to the periplasm. Functionally, part of the Tol-Pal system, which plays a role in outer membrane invagination during cell division and is important for maintaining outer membrane integrity. The chain is Tol-Pal system protein TolB from Burkholderia orbicola (strain MC0-3).